Consider the following 294-residue polypeptide: Diaminopimelate epimerase (294 aa).

Residues N15, Q47, and N67 each coordinate substrate. C76 functions as the Proton donor in the catalytic mechanism. Substrate is bound by residues 77–78, N163, N197, and 215–216; these read GN and ER. The active-site Proton acceptor is C224. 225–226 is a binding site for substrate; it reads GS.

The protein belongs to the diaminopimelate epimerase family. Homodimer.

The protein resides in the cytoplasm. It catalyses the reaction (2S,6S)-2,6-diaminopimelate = meso-2,6-diaminopimelate. The protein operates within amino-acid biosynthesis; L-lysine biosynthesis via DAP pathway; DL-2,6-diaminopimelate from LL-2,6-diaminopimelate: step 1/1. Catalyzes the stereoinversion of LL-2,6-diaminopimelate (L,L-DAP) to meso-diaminopimelate (meso-DAP), a precursor of L-lysine and an essential component of the bacterial peptidoglycan. The chain is Diaminopimelate epimerase from Mesorhizobium japonicum (strain LMG 29417 / CECT 9101 / MAFF 303099) (Mesorhizobium loti (strain MAFF 303099)).